An 876-amino-acid polypeptide reads, in one-letter code: MSNERYNARESEPKWQAKWDEAKIFATRNDDLRKKYYVLEMFPYPSGRIHMGHVRNYTMGDVVARTMRARGYNVLHPMGWDAFGLPAENAAIERKVAPKAWTYDNIAAMKKQLQTMGLSLDWAREFATCDPSYYKHQQKMFLDFLKVGLVEREKRKLNWDPVDMTVLANEQVIDGRGWRSGAVVELREMNQWVFKITKYAQELLDALDTLDRWPDKVRLMQRNWIGRSEGLMVRFALDSATTPAGETELKIFTTRPDTLFGAKFMAIAADHPLAQAAAAKAPKVAAFIDDCKKRGTAQAEIDTAEKQGIDTGIRAVHPFDPSWKLPVYVANFVLMEYGTGAIFGCPAHDQRDLDFVNKYQLGNTPVVCPEGQDPASFVITDTAYDGEGRMINSRFLDGKTIAEAKEEVAKRLETEQLAGAPVGARKVNFRLRDWGISRQRYWGCPIPIIHCPTCDVVPVPDADLPVVLPEDVSFDKPGNALDHHPTWKHVTCPKCGGKAVRETDTMDTFVDSSWYFARFTDPWNTEAPTTPDVVNRMMPVDQYIGGVEHAILHLLYSRFFTRAMKAAGHIDIQHDEPFAGLFTQGMVVHETYRKADGHFASPAEISITVEGDTRRATLLDGGSPVEIGPIEKMSKSKRNTVDPDDIIGTYGADTARWFMLSDSPPDRDVIWSEEGVKGASRFVQRLWRMVNDAAPIAASAPAERPASFGADALTLRKAAHGALDKVLSGIERLAFNVSLAHIREFSNTLGDALARSQTPSPDLAWAIRESTVILVQLFHPMMPHLAEECWTVLGQTGLVSEALWPPIEQDLLVEDSITLPVQVNGKKRGDVTVPRDAPTSEIEAAVLALDTVKQALGGKPVRKVIVVPQRIVNVVG.

The 'HIGH' region motif lies at 43–53 (PYPSGRIHMGH). The short motif at 632–636 (KMSKS) is the 'KMSKS' region element. K635 provides a ligand contact to ATP.

The protein belongs to the class-I aminoacyl-tRNA synthetase family.

It localises to the cytoplasm. The catalysed reaction is tRNA(Leu) + L-leucine + ATP = L-leucyl-tRNA(Leu) + AMP + diphosphate. The polypeptide is Leucine--tRNA ligase (Rhodopseudomonas palustris (strain ATCC BAA-98 / CGA009)).